The sequence spans 393 residues: NAD(P)H-quinone oxidoreductase subunit H, chloroplastic (393 aa).

It belongs to the complex I 49 kDa subunit family. In terms of assembly, NDH is composed of at least 16 different subunits, 5 of which are encoded in the nucleus.

It is found in the plastid. Its subcellular location is the chloroplast thylakoid membrane. The catalysed reaction is a plastoquinone + NADH + (n+1) H(+)(in) = a plastoquinol + NAD(+) + n H(+)(out). It catalyses the reaction a plastoquinone + NADPH + (n+1) H(+)(in) = a plastoquinol + NADP(+) + n H(+)(out). NDH shuttles electrons from NAD(P)H:plastoquinone, via FMN and iron-sulfur (Fe-S) centers, to quinones in the photosynthetic chain and possibly in a chloroplast respiratory chain. The immediate electron acceptor for the enzyme in this species is believed to be plastoquinone. Couples the redox reaction to proton translocation, and thus conserves the redox energy in a proton gradient. The protein is NAD(P)H-quinone oxidoreductase subunit H, chloroplastic of Guizotia abyssinica (Niger).